Here is a 427-residue protein sequence, read N- to C-terminus: MNKNKREKEFYSVDVGDSTFTVLKRYQNLRPIGSGAQGIVCSAYDHNLERNVAIKKLSRPFQNQTHAKRAYRELVLMKCVNHKNIIGLLNVFTPQKTLEEFQDVYLVMELMDANLCQVIQMELDHERLSYLLYQMLCGTKHLHSAGIIHRDLKPSNIVVKSDCTLKILDFGLARTAATGLLMTPYVVTRYYRAPEVILGMGYQANVDVWSVGCIMAEMVRGSVLFPGSDHIDQWNKVIEQLGTPSQEFMMKLNQSVRTYVENRPRYTGYSFEKLFPDVLFPADSEHNKLKASQARDLLSKMLVIDASKRISVDEALQHPYINVWYDPAEVEAPPPLIIDKQLDEREHTVEEWKELIFKEVLDWEERMKNGVIRGQPSPIGAAVINGSPQPSSSSSINDVSSMSTEPTVASDTDSSLEASAGPLSCCR.

The 296-residue stretch at 26–321 folds into the Protein kinase domain; it reads YQNLRPIGSG…VDEALQHPYI (296 aa). ATP is bound by residues 33-40 and lysine 55; that span reads GSGAQGIV. Aspartate 151 serves as the catalytic Proton acceptor. At threonine 183 the chain carries Phosphothreonine. The short motif at 183-185 is the TXY element; sequence TPY. Tyrosine 185 carries the post-translational modification Phosphotyrosine. Residues 372–427 are disordered; it reads IRGQPSPIGAAVINGSPQPSSSSSINDVSSMSTEPTVASDTDSSLEASAGPLSCCR. Low complexity predominate over residues 387–403; the sequence is SPQPSSSSSINDVSSMS. Residues 404-417 show a composition bias toward polar residues; that stretch reads TEPTVASDTDSSLE.

The protein belongs to the protein kinase superfamily. CMGC Ser/Thr protein kinase family. MAP kinase subfamily. Requires Mg(2+) as cofactor. Dually phosphorylated on Thr-183 and Tyr-185, which activates the enzyme. As to expression, expressed at high levels in the ovary and at lower levels in brain, gill, heart, spleen, liver, kidney, muscle, bladder and gut.

It catalyses the reaction L-seryl-[protein] + ATP = O-phospho-L-seryl-[protein] + ADP + H(+). The catalysed reaction is L-threonyl-[protein] + ATP = O-phospho-L-threonyl-[protein] + ADP + H(+). Its activity is regulated as follows. Activated by threonine and tyrosine phosphorylation. Its function is as follows. Responds to activation by environmental stress and pro-inflammatory cytokines by phosphorylating a number of transcription factors, primarily components of AP-1 such as c-Jun and ATF2 and thus regulates AP-1 transcriptional activity. May play a role in the regulation of the circadian clock. This Cyprinus carpio (Common carp) protein is Mitogen-activated protein kinase 8B (mapk8b).